The following is a 262-amino-acid chain: Ubiquinone biosynthesis protein COQ4, mitochondrial (262 aa).

Zn(2+) is bound by residues H154, D155, H158, and E170. A disordered region spans residues 243–262; it reads LGIEQPPDLRQMKKDMAKKK. Basic and acidic residues predominate over residues 252–262; sequence RQMKKDMAKKK.

The protein belongs to the COQ4 family. As to quaternary structure, component of a multi-subunit COQ enzyme complex, composed of at least COQ3, COQ4, COQ5, COQ6, COQ7 and COQ9. Zn(2+) serves as cofactor.

The protein localises to the mitochondrion inner membrane. The enzyme catalyses a 4-hydroxy-3-methoxy-5-(all-trans-polyprenyl)benzoate + H(+) = a 2-methoxy-6-(all-trans-polyprenyl)phenol + CO2. The protein operates within cofactor biosynthesis; ubiquinone biosynthesis. Lyase that catalyzes the C1-decarboxylation of 4-hydroxy-3-methoxy-5-(all-trans-polyprenyl)benzoic acid into 2-methoxy-6-(all-trans-polyprenyl)phenol during ubiquinone biosynthesis. In Yarrowia lipolytica (strain CLIB 122 / E 150) (Yeast), this protein is Ubiquinone biosynthesis protein COQ4, mitochondrial.